Here is a 930-residue protein sequence, read N- to C-terminus: Protocadherin gamma-A4 (930 aa).

The N-terminal stretch at Met1–Ala27 is a signal peptide. Cadherin domains follow at residues Glu28 to Phe132, Gly133 to Phe241, Thr242 to Val346, Thr347 to Phe451, Thr452 to Ile561, and Asp569 to Asp682. Residues Glu28–Tyr691 are Extracellular-facing. 2 N-linked (GlcNAc...) asparagine glycosylation sites follow: Asn418 and Asn544. A helical membrane pass occupies residues Leu692–Ile712. Over His713–Lys930 the chain is Cytoplasmic. Disordered stretches follow at residues Ser803 to Asn839 and Ala900 to Lys930. The span at Asn920–Lys930 shows a compositional bias: basic residues.

It is found in the cell membrane. Functionally, potential calcium-dependent cell-adhesion protein. May be involved in the establishment and maintenance of specific neuronal connections in the brain. This is Protocadherin gamma-A4 from Mus musculus (Mouse).